A 104-amino-acid polypeptide reads, in one-letter code: L-rhamnose mutarotase (104 aa).

Residue Y18 participates in substrate binding. H22 acts as the Proton donor in catalysis. Residues Y41 and 76-77 (WW) contribute to the substrate site.

It belongs to the rhamnose mutarotase family. Homodimer.

It localises to the cytoplasm. The catalysed reaction is alpha-L-rhamnose = beta-L-rhamnose. It participates in carbohydrate metabolism; L-rhamnose metabolism. Involved in the anomeric conversion of L-rhamnose. In Escherichia coli O8 (strain IAI1), this protein is L-rhamnose mutarotase.